A 184-amino-acid chain; its full sequence is Probable RNA 2'-phosphotransferase (184 aa).

It belongs to the KptA/TPT1 family.

Removes the 2'-phosphate from RNA via an intermediate in which the phosphate is ADP-ribosylated by NAD followed by a presumed transesterification to release the RNA and generate ADP-ribose 1''-2''-cyclic phosphate (APPR&gt;P). May function as an ADP-ribosylase. The polypeptide is Probable RNA 2'-phosphotransferase (Rhizobium johnstonii (strain DSM 114642 / LMG 32736 / 3841) (Rhizobium leguminosarum bv. viciae)).